The sequence spans 267 residues: Tryptophan synthase alpha chain (267 aa).

Catalysis depends on proton acceptor residues Glu-49 and Asp-60.

This sequence belongs to the TrpA family. In terms of assembly, tetramer of two alpha and two beta chains.

The catalysed reaction is (1S,2R)-1-C-(indol-3-yl)glycerol 3-phosphate + L-serine = D-glyceraldehyde 3-phosphate + L-tryptophan + H2O. It participates in amino-acid biosynthesis; L-tryptophan biosynthesis; L-tryptophan from chorismate: step 5/5. The alpha subunit is responsible for the aldol cleavage of indoleglycerol phosphate to indole and glyceraldehyde 3-phosphate. The polypeptide is Tryptophan synthase alpha chain (Acaryochloris marina (strain MBIC 11017)).